A 218-amino-acid polypeptide reads, in one-letter code: Protein Syd (218 aa).

Belongs to the Syd family.

Its subcellular location is the cell inner membrane. In terms of biological role, interacts with the SecY protein in vivo. May bind preferentially to an uncomplexed state of SecY, thus functioning either as a chelating agent for excess SecY in the cell or as a regulatory factor that negatively controls the translocase function. This is Protein Syd from Shewanella denitrificans (strain OS217 / ATCC BAA-1090 / DSM 15013).